The chain runs to 390 residues: MAFAASHTASPSSCGGVAQRRSNGMSPVVAMASTINRVKTAKKPYTPPREVHLQVKHSLPPQKREIFDSLQPWAKENLLNLLKPVEKSWQPQDFLPDPSSDGFYDEVKELRERAKEIPDDYFVCLVGDMVTEEALPTYQTMLNTLDGVRDETGASPTTWAVWTRAWTAEENRHGDLLNKYMYLTGRVDMKQIEKTIQYLIGSGMDPGTENNPYLGFLYTSFQERATFISHGNTARHAKEYGDLKLAQICGTIAADEKRHETAYTKIVEKLFEIDPDYTVLAFADMMRKKISMPAHLMYDGKDDNLFEHFSAVAQRLGVYTARDYADILEFLVQRWKVADLTGLSGEGRRAQDFVCTLAPRIRRLDERAQARAKQAPVIPFSWVYDRKVQL.

A disordered region spans residues 1-22 (MAFAASHTASPSSCGGVAQRRS). A chloroplast-targeting transit peptide spans 1–31 (MAFAASHTASPSSCGGVAQRRSNGMSPVVAM). Residues Glu-132, Glu-170, His-173, Glu-223, Glu-256, and His-259 each coordinate Fe cation.

This sequence belongs to the fatty acid desaturase type 2 family. In terms of assembly, homodimer. It depends on Fe(2+) as a cofactor.

The protein resides in the plastid. The protein localises to the chloroplast. The catalysed reaction is octadecanoyl-[ACP] + 2 reduced [2Fe-2S]-[ferredoxin] + O2 + 2 H(+) = (9Z)-octadecenoyl-[ACP] + 2 oxidized [2Fe-2S]-[ferredoxin] + 2 H2O. Its pathway is lipid metabolism; fatty acid metabolism. Converts stearoyl-ACP to oleoyl-ACP by introduction of a cis double bond between carbons 9 and 10 of the acyl chain. This is Stearoyl-[acyl-carrier-protein] 9-desaturase 5, chloroplastic from Oryza sativa subsp. japonica (Rice).